The sequence spans 212 residues: Putative inactive 6-phospho-alpha-glucosidase (212 aa).

4-70 (FSVVVAGGGS…PDIAFSYTTD (67 aa)) is a binding site for NAD(+). The Mn(2+) site is built by Cys169 and His200.

The protein belongs to the glycosyl hydrolase 4 family.

This is Putative inactive 6-phospho-alpha-glucosidase from Escherichia coli (strain K12).